The sequence spans 715 residues: Protein DENND6 homolog (715 aa).

Positions 13–58 (MIFKEEEIKKQQILLEKEEKEKQEQQQKKLNKDNIFKLEEEGKKLE) form a coiled coil. In terms of domain architecture, uDENN spans 96-273 (NSFCIINFDL…VKQHQLGGGS (178 aa)). 2 disordered regions span residues 269–296 (LGGG…SNTT) and 392–416 (SGTR…NNNN). The cDENN domain maps to 299–476 (SPSIWSEMKL…KDLLTRHVLD (178 aa)). Residues 399 to 416 (SNNNNNQDDSEYNNNNNN) are compositionally biased toward low complexity. The 123-residue stretch at 478 to 600 (KEKILSEYKP…KQWLDDKRAQ (123 aa)) folds into the dDENN domain.

This sequence belongs to the DENND6 family.

This Dictyostelium discoideum (Social amoeba) protein is Protein DENND6 homolog.